The primary structure comprises 505 residues: Glutamate--tRNA ligase (505 aa).

Positions 16-26 (PSPTGFPHVGT) match the 'HIGH' region motif. The short motif at 257 to 261 (KLSKR) is the 'KMSKS' region element. Lysine 260 contributes to the ATP binding site.

Belongs to the class-I aminoacyl-tRNA synthetase family. Glutamate--tRNA ligase type 1 subfamily. As to quaternary structure, monomer.

It is found in the cytoplasm. The catalysed reaction is tRNA(Glu) + L-glutamate + ATP = L-glutamyl-tRNA(Glu) + AMP + diphosphate. Its function is as follows. Catalyzes the attachment of glutamate to tRNA(Glu) in a two-step reaction: glutamate is first activated by ATP to form Glu-AMP and then transferred to the acceptor end of tRNA(Glu). The protein is Glutamate--tRNA ligase of Psychrobacter sp. (strain PRwf-1).